Reading from the N-terminus, the 129-residue chain is uncharacterized protein (129 aa).

This is an uncharacterized protein from Lepidoptera (butterflies and moths).